Consider the following 119-residue polypeptide: Dihydroneopterin aldolase (119 aa).

Substrate-binding positions include E21, Y53, and I72–E73. The active-site Proton donor/acceptor is the K99.

It belongs to the DHNA family.

It carries out the reaction 7,8-dihydroneopterin = 6-hydroxymethyl-7,8-dihydropterin + glycolaldehyde. The protein operates within cofactor biosynthesis; tetrahydrofolate biosynthesis; 2-amino-4-hydroxy-6-hydroxymethyl-7,8-dihydropteridine diphosphate from 7,8-dihydroneopterin triphosphate: step 3/4. Catalyzes the conversion of 7,8-dihydroneopterin to 6-hydroxymethyl-7,8-dihydropterin. This is Dihydroneopterin aldolase (folB) from Streptococcus pyogenes serotype M1.